A 376-amino-acid polypeptide reads, in one-letter code: Polycomb group protein FIE1 (376 aa).

WD repeat units lie at residues 85 to 127 (DKDE…LLKT), 130 to 170 (GHGD…CILI), 176 to 216 (GHRN…PYVE), 242 to 279 (VHSNYVDCTRWLGDFILSKSVDNEIVLWEPKTKEQSPG), 291 to 332 (VPEC…PVLT), and 339 to 376 (QCKSAIRQTAVSFDGSTILACSEDGSIWRWDEVDHPKA).

The protein belongs to the WD repeat ESC family. Interacts with EZ1. Component of the polycomb repressive complex 2 (PRC2), composed of the core PRC2 components EMF2B, EZ1 and CLF. PRC2 methylates 'Lys-27' residues of histone H3 (H3K27me3), leading to transcriptional repression of the affected target gene. Widely expressed.

Its function is as follows. Polycomb group (PcG) protein. PcG proteins act by forming multiprotein complexes, which are required to maintain the transcriptionally repressive state of homeotic genes throughout development. PcG proteins are not required to initiate repression, but to maintain it during later stages of development. They act via the methylation of histones, rendering chromatin heritably changed in its expressibility. Involved in the regulation of seed endosperm development, grain filling and seed dormancy. FIE2-containing PcG complex in seed endosperm regulates the expression of various transcription factors by trimethylation on histone H3 'Lys-27' (H3K27me3) of target genes. Involved in the overall expression regulation of a large number of nutrient metabolism genes. Involved in the regulation of seed endosperm development. Involved in the regulation of vegetative development, particularly in stem cell maintenance in the root system, where it maintains the suppression of key differentiation regulators. The protein is Polycomb group protein FIE1 of Oryza sativa subsp. japonica (Rice).